The primary structure comprises 407 residues: Serine/threonine transporter SstT (407 aa).

The next 9 helical transmembrane spans lie at 14 to 34 (GSLV…ATVS), 48 to 68 (FVGA…AASI), 82 to 102 (IVIL…LMSF), 141 to 161 (AVIT…GLAL), 192 to 212 (IGIF…AIAG), 218 to 238 (LVLL…IVFF), 290 to 310 (IPLG…ILTL), 316 to 336 (MGIQ…GVSA), and 363 to 383 (VAMQ…SAET).

It belongs to the dicarboxylate/amino acid:cation symporter (DAACS) (TC 2.A.23) family.

It is found in the cell inner membrane. It carries out the reaction L-serine(in) + Na(+)(in) = L-serine(out) + Na(+)(out). The catalysed reaction is L-threonine(in) + Na(+)(in) = L-threonine(out) + Na(+)(out). Functionally, involved in the import of serine and threonine into the cell, with the concomitant import of sodium (symport system). The sequence is that of Serine/threonine transporter SstT from Shewanella pealeana (strain ATCC 700345 / ANG-SQ1).